A 148-amino-acid polypeptide reads, in one-letter code: Large ribosomal subunit protein bL9 (148 aa).

This sequence belongs to the bacterial ribosomal protein bL9 family.

Binds to the 23S rRNA. This chain is Large ribosomal subunit protein bL9, found in Pseudomonas putida (strain GB-1).